We begin with the raw amino-acid sequence, 289 residues long: BTB/POZ domain-containing protein KCTD7 (289 aa).

A disordered region spans residues 1–42 (MVVVNGREPDSRHSDGAMSSSEAEDDFLEPATPTATQAGHGL). Residues 53–141 (VPLNIGGAHF…YAIGPLLEQL (89 aa)) form the BTB domain.

In terms of assembly, interacts with CUL3.

The protein resides in the cell membrane. It localises to the cytoplasm. The protein localises to the cytosol. May be involved in the control of excitability of cortical neurons. The protein is BTB/POZ domain-containing protein KCTD7 (Kctd7) of Rattus norvegicus (Rat).